A 122-amino-acid polypeptide reads, in one-letter code: Large ribosomal subunit protein uL14 (122 aa).

It belongs to the universal ribosomal protein uL14 family. As to quaternary structure, part of the 50S ribosomal subunit. Forms a cluster with proteins L3 and L19. In the 70S ribosome, L14 and L19 interact and together make contacts with the 16S rRNA in bridges B5 and B8.

In terms of biological role, binds to 23S rRNA. Forms part of two intersubunit bridges in the 70S ribosome. This chain is Large ribosomal subunit protein uL14, found in Borreliella afzelii (strain PKo) (Borrelia afzelii).